Here is a 241-residue protein sequence, read N- to C-terminus: tRNA (guanine-N(1)-)-methyltransferase (241 aa).

Residues G112 and 131-136 (LGDFVL) contribute to the S-adenosyl-L-methionine site.

This sequence belongs to the RNA methyltransferase TrmD family. Homodimer.

The protein resides in the cytoplasm. It catalyses the reaction guanosine(37) in tRNA + S-adenosyl-L-methionine = N(1)-methylguanosine(37) in tRNA + S-adenosyl-L-homocysteine + H(+). Specifically methylates guanosine-37 in various tRNAs. The sequence is that of tRNA (guanine-N(1)-)-methyltransferase from Clostridium novyi (strain NT).